A 258-amino-acid polypeptide reads, in one-letter code: Imidazole glycerol phosphate synthase subunit HisF (258 aa).

Catalysis depends on residues Asp11 and Asp130.

This sequence belongs to the HisA/HisF family. Heterodimer of HisH and HisF.

It is found in the cytoplasm. The catalysed reaction is 5-[(5-phospho-1-deoxy-D-ribulos-1-ylimino)methylamino]-1-(5-phospho-beta-D-ribosyl)imidazole-4-carboxamide + L-glutamine = D-erythro-1-(imidazol-4-yl)glycerol 3-phosphate + 5-amino-1-(5-phospho-beta-D-ribosyl)imidazole-4-carboxamide + L-glutamate + H(+). It functions in the pathway amino-acid biosynthesis; L-histidine biosynthesis; L-histidine from 5-phospho-alpha-D-ribose 1-diphosphate: step 5/9. In terms of biological role, IGPS catalyzes the conversion of PRFAR and glutamine to IGP, AICAR and glutamate. The HisF subunit catalyzes the cyclization activity that produces IGP and AICAR from PRFAR using the ammonia provided by the HisH subunit. The protein is Imidazole glycerol phosphate synthase subunit HisF of Yersinia pestis (strain Pestoides F).